A 208-amino-acid chain; its full sequence is ER membrane protein complex subunit 8/9 homolog (208 aa).

The region spanning 11 to 146 is the MPN domain; it reads YEISQNAYIK…ERSPVMQLCV (136 aa).

The protein belongs to the EMC8/EMC9 family.

In Arabidopsis thaliana (Mouse-ear cress), this protein is ER membrane protein complex subunit 8/9 homolog (EMB2731).